The following is a 249-amino-acid chain: MHSIPADTGHTPSRAPAGNGSPPADVAFPKAIKSYVRRAGRTTTGQAKALETFGSQFVLDYTPGPLDAQAAFGRAAPLILEIGFGMGEATAHIAGVRPQDDFLCCEVHEPGVGALLKRIGERGLTNIRILQHDAVEVIDHMLPEGSLDGVHIFFPDPWHKKRHNKRRLVQPPLVAKLARRLKPGGYLHCATDWQPYAEQMLEVLSAEPLLANSADGYAPQPDYRPLTKFENRGLRLGHGVWDILFRRVA.

Residues M1 to A24 form a disordered region. E81, E106, D133, and D156 together coordinate S-adenosyl-L-methionine. D156 is a catalytic residue. K160 is a binding site for substrate. The interval R162–R167 is interaction with RNA. Residues D192 and T227–E230 each bind substrate.

This sequence belongs to the class I-like SAM-binding methyltransferase superfamily. TrmB family.

It catalyses the reaction guanosine(46) in tRNA + S-adenosyl-L-methionine = N(7)-methylguanosine(46) in tRNA + S-adenosyl-L-homocysteine. The protein operates within tRNA modification; N(7)-methylguanine-tRNA biosynthesis. In terms of biological role, catalyzes the formation of N(7)-methylguanine at position 46 (m7G46) in tRNA. The protein is tRNA (guanine-N(7)-)-methyltransferase of Paracidovorax citrulli (strain AAC00-1) (Acidovorax citrulli).